A 463-amino-acid chain; its full sequence is uncharacterized protein (463 aa).

A PE domain is found at 1 to 93 (MSYMIAVPDM…AGAYASAEAT (93 aa)). Disordered regions lie at residues 231–320 (GGAG…AGNG) and 408–463 (NGGD…TPGQ). Gly residues predominate over residues 408–451 (NGGDGGKGGDAQLIGNGGNGGNGGKGGTGLMPGINGTGGAGGSR).

The protein belongs to the mycobacterial PE family. PGRS subfamily.

This is an uncharacterized protein from Mycobacterium tuberculosis (strain ATCC 25618 / H37Rv).